Here is a 334-residue protein sequence, read N- to C-terminus: Aspartate carbamoyltransferase catalytic subunit (334 aa).

Positions 71 and 72 each coordinate carbamoyl phosphate. Lys99 provides a ligand contact to L-aspartate. 3 residues coordinate carbamoyl phosphate: Arg121, His151, and Gln154. L-aspartate is bound by residues Arg184 and Arg239. Carbamoyl phosphate-binding residues include Gly280 and Pro281.

This sequence belongs to the aspartate/ornithine carbamoyltransferase superfamily. ATCase family. As to quaternary structure, heterododecamer (2C3:3R2) of six catalytic PyrB chains organized as two trimers (C3), and six regulatory PyrI chains organized as three dimers (R2).

The catalysed reaction is carbamoyl phosphate + L-aspartate = N-carbamoyl-L-aspartate + phosphate + H(+). Its pathway is pyrimidine metabolism; UMP biosynthesis via de novo pathway; (S)-dihydroorotate from bicarbonate: step 2/3. Catalyzes the condensation of carbamoyl phosphate and aspartate to form carbamoyl aspartate and inorganic phosphate, the committed step in the de novo pyrimidine nucleotide biosynthesis pathway. This Pseudomonas fluorescens (strain SBW25) protein is Aspartate carbamoyltransferase catalytic subunit.